We begin with the raw amino-acid sequence, 177 residues long: Large ribosomal subunit protein uL10 (177 aa).

This sequence belongs to the universal ribosomal protein uL10 family. In terms of assembly, part of the ribosomal stalk of the 50S ribosomal subunit. The N-terminus interacts with L11 and the large rRNA to form the base of the stalk. The C-terminus forms an elongated spine to which L12 dimers bind in a sequential fashion forming a multimeric L10(L12)X complex.

Its function is as follows. Forms part of the ribosomal stalk, playing a central role in the interaction of the ribosome with GTP-bound translation factors. The polypeptide is Large ribosomal subunit protein uL10 (Leptospira biflexa serovar Patoc (strain Patoc 1 / Ames)).